A 344-amino-acid polypeptide reads, in one-letter code: Selenide, water dikinase (344 aa).

The active site involves C16. Residues K19 and 47–49 (SRD) each bind ATP. Residue D50 participates in Mg(2+) binding. Residues D67, D90, and 138-140 (GHS) each bind ATP. D90 lines the Mg(2+) pocket. D226 is a binding site for Mg(2+).

The protein belongs to the selenophosphate synthase 1 family. Class I subfamily. As to quaternary structure, homodimer. Mg(2+) serves as cofactor.

It catalyses the reaction hydrogenselenide + ATP + H2O = selenophosphate + AMP + phosphate + 2 H(+). In terms of biological role, synthesizes selenophosphate from selenide and ATP. The chain is Selenide, water dikinase from Pseudomonas putida (strain ATCC 47054 / DSM 6125 / CFBP 8728 / NCIMB 11950 / KT2440).